A 142-amino-acid polypeptide reads, in one-letter code: Putative pterin-4-alpha-carbinolamine dehydratase (142 aa).

The protein belongs to the pterin-4-alpha-carbinolamine dehydratase family.

The enzyme catalyses (4aS,6R)-4a-hydroxy-L-erythro-5,6,7,8-tetrahydrobiopterin = (6R)-L-erythro-6,7-dihydrobiopterin + H2O. The sequence is that of Putative pterin-4-alpha-carbinolamine dehydratase (pcbd-1) from Caenorhabditis elegans.